Consider the following 260-residue polypeptide: Malonyl-[acyl-carrier protein] O-methyltransferase (260 aa).

This sequence belongs to the methyltransferase superfamily.

The enzyme catalyses malonyl-[ACP] + S-adenosyl-L-methionine = malonyl-[ACP] methyl ester + S-adenosyl-L-homocysteine. It participates in cofactor biosynthesis; biotin biosynthesis. Converts the free carboxyl group of a malonyl-thioester to its methyl ester by transfer of a methyl group from S-adenosyl-L-methionine (SAM). It allows to synthesize pimeloyl-ACP via the fatty acid synthetic pathway. This is Malonyl-[acyl-carrier protein] O-methyltransferase from Herminiimonas arsenicoxydans.